Reading from the N-terminus, the 194-residue chain is Isopentenyl-diphosphate Delta-isomerase (194 aa).

2 residues coordinate Mn(2+): histidine 35 and histidine 42. A Nudix hydrolase domain is found at 40 to 174; it reads PLHLAFSSYL…PWALSPWSVD (135 aa). Cysteine 77 is a catalytic residue. Histidine 79 is a Mn(2+) binding site. Mg(2+) is bound at residue glutamate 97. The Mn(2+) site is built by glutamate 124 and glutamate 126. The active site involves glutamate 126.

This sequence belongs to the IPP isomerase type 1 family. The cofactor is Mg(2+). Mn(2+) serves as cofactor.

It is found in the cytoplasm. The enzyme catalyses isopentenyl diphosphate = dimethylallyl diphosphate. It participates in isoprenoid biosynthesis; dimethylallyl diphosphate biosynthesis; dimethylallyl diphosphate from isopentenyl diphosphate: step 1/1. Functionally, catalyzes the 1,3-allylic rearrangement of the homoallylic substrate isopentenyl (IPP) to its highly electrophilic allylic isomer, dimethylallyl diphosphate (DMAPP). The chain is Isopentenyl-diphosphate Delta-isomerase from Frankia alni (strain DSM 45986 / CECT 9034 / ACN14a).